A 119-amino-acid polypeptide reads, in one-letter code: Phosphoribosyl-AMP cyclohydrolase (119 aa).

Asp-77 serves as a coordination point for Mg(2+). Residue Cys-78 coordinates Zn(2+). Mg(2+) is bound by residues Asp-79 and Asp-81. Zn(2+)-binding residues include Cys-94 and Cys-101.

It belongs to the PRA-CH family. As to quaternary structure, homodimer. Mg(2+) serves as cofactor. It depends on Zn(2+) as a cofactor.

It localises to the cytoplasm. The catalysed reaction is 1-(5-phospho-beta-D-ribosyl)-5'-AMP + H2O = 1-(5-phospho-beta-D-ribosyl)-5-[(5-phospho-beta-D-ribosylamino)methylideneamino]imidazole-4-carboxamide. Its pathway is amino-acid biosynthesis; L-histidine biosynthesis; L-histidine from 5-phospho-alpha-D-ribose 1-diphosphate: step 3/9. Its function is as follows. Catalyzes the hydrolysis of the adenine ring of phosphoribosyl-AMP. The chain is Phosphoribosyl-AMP cyclohydrolase from Ruegeria pomeroyi (strain ATCC 700808 / DSM 15171 / DSS-3) (Silicibacter pomeroyi).